The chain runs to 127 residues: Large ribosomal subunit protein uL24 (127 aa).

It belongs to the universal ribosomal protein uL24 family. In terms of assembly, component of the large ribosomal subunit. Mature ribosomes consist of a small (40S) and a large (60S) subunit. The 40S subunit contains about 32 different proteins and 1 molecule of RNA (18S). The 60S subunit contains 45 different proteins and 3 molecules of RNA (25S, 5.8S and 5S).

The protein resides in the cytoplasm. Its function is as follows. Component of the ribosome, a large ribonucleoprotein complex responsible for the synthesis of proteins in the cell. The small ribosomal subunit (SSU) binds messenger RNAs (mRNAs) and translates the encoded message by selecting cognate aminoacyl-transfer RNA (tRNA) molecules. The large subunit (LSU) contains the ribosomal catalytic site termed the peptidyl transferase center (PTC), which catalyzes the formation of peptide bonds, thereby polymerizing the amino acids delivered by tRNAs into a polypeptide chain. The nascent polypeptides leave the ribosome through a tunnel in the LSU and interact with protein factors that function in enzymatic processing, targeting, and the membrane insertion of nascent chains at the exit of the ribosomal tunnel. The protein is Large ribosomal subunit protein uL24 of Candida albicans (strain SC5314 / ATCC MYA-2876) (Yeast).